A 354-amino-acid chain; its full sequence is Anthranilate phosphoribosyltransferase (354 aa).

Residues glycine 94, 97–98, threonine 102, 104–107, 122–130, and serine 134 each bind 5-phospho-alpha-D-ribose 1-diphosphate; these read GD, NIST, and KHGNRAASS. Residue glycine 94 coordinates anthranilate. Serine 106 is a Mg(2+) binding site. Residue asparagine 125 coordinates anthranilate. Arginine 180 contributes to the anthranilate binding site. Mg(2+) is bound by residues aspartate 238 and glutamate 239.

Belongs to the anthranilate phosphoribosyltransferase family. In terms of assembly, homodimer. Requires Mg(2+) as cofactor.

It catalyses the reaction N-(5-phospho-beta-D-ribosyl)anthranilate + diphosphate = 5-phospho-alpha-D-ribose 1-diphosphate + anthranilate. Its pathway is amino-acid biosynthesis; L-tryptophan biosynthesis; L-tryptophan from chorismate: step 2/5. In terms of biological role, catalyzes the transfer of the phosphoribosyl group of 5-phosphorylribose-1-pyrophosphate (PRPP) to anthranilate to yield N-(5'-phosphoribosyl)-anthranilate (PRA). This is Anthranilate phosphoribosyltransferase from Streptomyces griseus subsp. griseus (strain JCM 4626 / CBS 651.72 / NBRC 13350 / KCC S-0626 / ISP 5235).